The following is a 218-amino-acid chain: Ribose-5-phosphate isomerase A (218 aa).

Residues 28–31 (TGST), 81–84 (DGAD), and 94–97 (KGGG) each bind substrate. Catalysis depends on glutamate 103, which acts as the Proton acceptor. Lysine 121 is a binding site for substrate.

It belongs to the ribose 5-phosphate isomerase family. Homodimer.

It carries out the reaction aldehydo-D-ribose 5-phosphate = D-ribulose 5-phosphate. It participates in carbohydrate degradation; pentose phosphate pathway; D-ribose 5-phosphate from D-ribulose 5-phosphate (non-oxidative stage): step 1/1. Functionally, catalyzes the reversible conversion of ribose-5-phosphate to ribulose 5-phosphate. The polypeptide is Ribose-5-phosphate isomerase A (Vibrio campbellii (strain ATCC BAA-1116)).